The primary structure comprises 617 residues: MRCLAARVNYKTLIIICALFTLVTVLLWNKCSSDKAIQVPRHLSSGFRVDALEKKAAASESNNYVNHMAKQSEEAFPQEQQKAPPVVGGFNNNGGGRVLGLKYEEIDCLINDEHTIKGRREGNEVFLPFTWVEKYFDVYGKVVQYDGYDRFEFSHSYSKVYAQRAPYHPDGVFMSFEGYNVEVRDRVKCISGVEGVPLSTQWGPQGYFYPIQIAQYGLSHYSKNLTEKPPHIEVYETAEDRDKNSKPNDWTVPKGCFMASVADKSRFTNVKQFIAPETSEGVSLQLGNTKDFIISFDLKFLTNGSVSVVLETTEKNQLFTVHYVSNTQLIAFKERDIYYGIGPRTSWSTVTRDLVTDLRKGVGLSNTKAVKPTRIMPKKVVRLIAKGKGFLDNITISTTAHMAAFFAASDWLVRNQDEKGGWPIMVTRKLGEGFKSLEPGWYSAMAQGQAISTLVRAYLLTKDHIFLNSALRATAPYKFLSEQHGVKAVFMNKHDWYEEYPTTPSSFVLNGFMYSLIGLYDLKETAGEKLGKEARSLYERGMESLKAMLPLYDTGSGTIYDLRHFMLGIAPNLARWDYHTTHINQLQLLSTIDESPIFKEFVKRWKSYLKGSRAKHN.

Topologically, residues 1–11 are cytoplasmic; the sequence is MRCLAARVNYK. Residues 12–28 traverse the membrane as a helical; Signal-anchor for type II membrane protein segment; the sequence is TLIIICALFTLVTVLLW. The Lumenal segment spans residues 29–617; sequence NKCSSDKAIQ…YLKGSRAKHN (589 aa). Substrate contacts are provided by residues tyrosine 179, 184–186, glutamine 201, tyrosine 209, glutamine 212, and glutamine 215; that span reads RDR. 5 residues coordinate Ca(2+): threonine 237, glutamate 239, threonine 268, asparagine 269, and aspartate 392. Residues 429–432, 499–500, asparagine 510, tyrosine 514, tyrosine 560, arginine 563, and 572–581 each bind substrate; these read KLGE, EY, and NLARWDYHTT.

The protein belongs to the D-glucuronyl C5-epimerase family. Homodimer. Interacts with HS2ST1.

The protein resides in the golgi apparatus membrane. The enzyme catalyses [heparosan-N-sulfate](n) = [heparan-N-sulfate](n). It participates in glycan metabolism; heparan sulfate biosynthesis. It functions in the pathway glycan metabolism; heparin biosynthesis. Its function is as follows. Converts D-glucuronic acid residues adjacent to N-sulfate sugar residues to L-iduronic acid residues, both in maturing heparan sulfate (HS) and heparin chains. This is important for further modifications that determine the specificity of interactions between these glycosaminoglycans and proteins. In Bos taurus (Bovine), this protein is D-glucuronyl C5-epimerase (GLCE).